The sequence spans 504 residues: MDKFQSYLGLDRSHYFLYPLIFQEYIYVLAHDHGLNGSVLLENAGYDNKSSLLIVKRLIIRMYQQNHLILSVNDSKQTPFLGHNKNFYSQVMSEVSSTIMEIPLSLRLISSLERKGVVKSDNLRSIHSIFSFLEDNFSHLNYVLDILIPYPAHMEILVQALRYWIKDASSLHLLRFFLHECHNWDSLITSNSKKAGSSFSKRNHRLFFFLYTSYVCEYESGFLFLRNQSSHLRSTSSGSLIERIYFYGKIEYLAEVFAGAFQANLWLFKDSFMHYVRYQGKSILASKGTFILMNKWKYYFVNFWKSYFYLWSQPGRIYINQLSNHSLDFLGYRSSVRLKPSMVRGQMLENTFLIDNAIKKFDSIVPIMPLVGSLAKSKFCNALGHPIGKAVWADLSDSDIIERFGRIYRNLSHYHSGSSKKKSLYRVKYILRLSCARTLARKHKSTVRAFLKRFGSRLLEEFFTEEEQVFSLTFPRVSSISRRLSRRRIWYLDIVCINDLANHE.

The protein belongs to the intron maturase 2 family. MatK subfamily.

The protein resides in the plastid. It localises to the chloroplast. Functionally, usually encoded in the trnK tRNA gene intron. Probably assists in splicing its own and other chloroplast group II introns. The polypeptide is Maturase K (Guizotia abyssinica (Niger)).